The chain runs to 427 residues: Queuine tRNA-ribosyltransferase catalytic subunit (427 aa).

Catalysis depends on D99, which acts as the Proton acceptor. Substrate-binding positions include 99–103 (DSGGF), D153, Q196, and G223. The RNA binding stretch occupies residues 254–260 (GVGFAAD). D273 functions as the Nucleophile in the catalytic mechanism. The segment at 278 to 282 (TRTAR) is RNA binding; important for wobble base 34 recognition. 4 residues coordinate Zn(2+): C311, C313, C316, and H341. The interval 395-427 (PADPERIDEQDQKPKTEKRRETEDVAEEQVASS) is disordered. Positions 397–417 (DPERIDEQDQKPKTEKRRETE) are enriched in basic and acidic residues.

Belongs to the queuine tRNA-ribosyltransferase family. As to quaternary structure, heterodimer of a catalytic subunit and an accessory subunit. Zn(2+) serves as cofactor.

It localises to the cytoplasm. The enzyme catalyses guanosine(34) in tRNA + queuine = queuosine(34) in tRNA + guanine. Its function is as follows. Catalytic subunit of the queuine tRNA-ribosyltransferase (TGT) that catalyzes the base-exchange of a guanine (G) residue with queuine (Q) at position 34 (anticodon wobble position) in tRNAs with GU(N) anticodons (tRNA-Asp, -Asn, -His and -Tyr), resulting in the hypermodified nucleoside queuosine (7-(((4,5-cis-dihydroxy-2-cyclopenten-1-yl)amino)methyl)-7-deazaguanosine). Catalysis occurs through a double-displacement mechanism. The nucleophile active site attacks the C1' of nucleotide 34 to detach the guanine base from the RNA, forming a covalent enzyme-RNA intermediate. The proton acceptor active site deprotonates the incoming queuine, allowing a nucleophilic attack on the C1' of the ribose to form the product. In Drosophila melanogaster (Fruit fly), this protein is Queuine tRNA-ribosyltransferase catalytic subunit (Tgt).